A 124-amino-acid chain; its full sequence is Fluoride-specific ion channel FluC (124 aa).

The next 4 helical transmembrane spans lie at 3–23 (VLLIFLGCGAGGVARYGVSNL), 34–54 (IGTLIVNITGSLLMGILFIFI), 68–88 (LLLIGFLGGYTTFSSFSIETF), and 100–120 (ALNVLLSVALCIAGAWLGVLI). Residues Gly-75 and Thr-78 each contribute to the Na(+) site.

The protein belongs to the fluoride channel Fluc/FEX (TC 1.A.43) family.

Its subcellular location is the cell inner membrane. The catalysed reaction is fluoride(in) = fluoride(out). With respect to regulation, na(+) is not transported, but it plays an essential structural role and its presence is essential for fluoride channel function. Its function is as follows. Fluoride-specific ion channel. Important for reducing fluoride concentration in the cell, thus reducing its toxicity. In Coxiella burnetii (strain Dugway 5J108-111), this protein is Fluoride-specific ion channel FluC.